The following is a 483-amino-acid chain: MKLKQLLQNIDYDLIKGDININIEGISYNSKKVKQNYVFVSIKGARFDGHDFIKEAAQNGAAAVIIDEDFHDSIENTTLVKVKNSKVALACLCNLFYEEPSRELNLVGVTGTNGKTTVIHYIRDMLEAFGNSTGTIGTLGYELKDKEINVEKINPTTPEALELNQILRDFIDKGAKNAVMEVTSSALMKHRVDYCSFKVGVFTNLSQDHLDEHGTIENYKNEKIKLFKMCPVGVINLDDNIAGEIIEKGTCEFFTYGVLTNADLTASDMVYKPNSVSFNVHYKGISSKVKVNVPGEFTVYNVLAAIGSLLCLGIDFESILKLVSSIKPVLGRLETINNPLNKNIIIDYAHTPDSLEKLLIMAREMTNGRIITVFGCGGDRDKSKRGLMGMAVGILSDYCIITSDNPRHEKPEDIIRDIERGMQTINSSYEKITDRRCAIKRGIEILKEEDILIIAGKGHEDYQIIGDNKVHFDDREVVNELLG.

Position 30 (serine 30) interacts with UDP-N-acetyl-alpha-D-muramoyl-L-alanyl-D-glutamate. 111-117 (GTNGKTT) serves as a coordination point for ATP. UDP-N-acetyl-alpha-D-muramoyl-L-alanyl-D-glutamate is bound by residues 156–157 (TT), threonine 183, and arginine 191. Position 223 is an N6-carboxylysine (lysine 223). Meso-2,6-diaminopimelate-binding positions include arginine 380, 404-407 (DNPR), glycine 456, and glutamate 460. A Meso-diaminopimelate recognition motif motif is present at residues 404–407 (DNPR).

The protein belongs to the MurCDEF family. MurE subfamily. The cofactor is Mg(2+). Post-translationally, carboxylation is probably crucial for Mg(2+) binding and, consequently, for the gamma-phosphate positioning of ATP.

Its subcellular location is the cytoplasm. It carries out the reaction UDP-N-acetyl-alpha-D-muramoyl-L-alanyl-D-glutamate + meso-2,6-diaminopimelate + ATP = UDP-N-acetyl-alpha-D-muramoyl-L-alanyl-gamma-D-glutamyl-meso-2,6-diaminopimelate + ADP + phosphate + H(+). It functions in the pathway cell wall biogenesis; peptidoglycan biosynthesis. Catalyzes the addition of meso-diaminopimelic acid to the nucleotide precursor UDP-N-acetylmuramoyl-L-alanyl-D-glutamate (UMAG) in the biosynthesis of bacterial cell-wall peptidoglycan. The polypeptide is UDP-N-acetylmuramoyl-L-alanyl-D-glutamate--2,6-diaminopimelate ligase 2 (Clostridium acetobutylicum (strain ATCC 824 / DSM 792 / JCM 1419 / IAM 19013 / LMG 5710 / NBRC 13948 / NRRL B-527 / VKM B-1787 / 2291 / W)).